Reading from the N-terminus, the 220-residue chain is Elongation factor Ts, chloroplastic (220 aa).

This sequence belongs to the EF-Ts family.

It localises to the plastid. The protein resides in the chloroplast. Functionally, associates with the EF-Tu.GDP complex and induces the exchange of GDP to GTP. It remains bound to the aminoacyl-tRNA.EF-Tu.GTP complex up to the GTP hydrolysis stage on the ribosome. This is Elongation factor Ts, chloroplastic (tsf) from Pyropia yezoensis (Susabi-nori).